The sequence spans 316 residues: Aspartate carbamoyltransferase catalytic subunit (316 aa).

Residues Arg-60 and Thr-61 each contribute to the carbamoyl phosphate site. L-aspartate is bound at residue Lys-88. Positions 110, 138, and 141 each coordinate carbamoyl phosphate. L-aspartate-binding residues include Arg-171 and Arg-225. Carbamoyl phosphate is bound by residues Gly-266 and Pro-267.

The protein belongs to the aspartate/ornithine carbamoyltransferase superfamily. ATCase family. In terms of assembly, heterododecamer (2C3:3R2) of six catalytic PyrB chains organized as two trimers (C3), and six regulatory PyrI chains organized as three dimers (R2).

It catalyses the reaction carbamoyl phosphate + L-aspartate = N-carbamoyl-L-aspartate + phosphate + H(+). It participates in pyrimidine metabolism; UMP biosynthesis via de novo pathway; (S)-dihydroorotate from bicarbonate: step 2/3. In terms of biological role, catalyzes the condensation of carbamoyl phosphate and aspartate to form carbamoyl aspartate and inorganic phosphate, the committed step in the de novo pyrimidine nucleotide biosynthesis pathway. This Rhizorhabdus wittichii (strain DSM 6014 / CCUG 31198 / JCM 15750 / NBRC 105917 / EY 4224 / RW1) (Sphingomonas wittichii) protein is Aspartate carbamoyltransferase catalytic subunit.